Consider the following 600-residue polypeptide: MMDGFAQDWPTLTHTDNGLAMDQLGVGVGVGDLPIDAGFEPQTRARSNTWPCPRPDNFVEPVDELDSTKASNQQLAPGDSQQAIQNANAAKKNSSRRNAWGNLSYADLITHAIGSATDKRLTLSQIYEWMVQNVPYFKDKGDSNSSAGWKNSIRHNLSLHNRFMRVQNEGTGKSSWWMLNPEAKPGKSVRRRAASMETSRYEKRRGRAKKRVEALRQAGVVGLNDATPSPSSSVSEGLDHFPESPLHSGGGFQLSPDFRQRASSNASSCGRLSPIRAQDLEPDWGFPGVDYQNTTMTQALEELTGSMADELTLCTQQQQQGFSAASGLPTQPPPPPYQPPQPQQQQQQGQQPSPYALNGPTPGYNTLQPQSQCLLHRSLNCSCLHNARDGLSPNSVTTTMSPAYPNSEPSSDSLNTYSNVVLDGPADTAALLVQQQQQLATNLEGQCLEVLNSEAQPIDEFNLENFPVGNLECNVEELLQQEMSYGGLLDINIPLASVNTNLVNSGAPISNITTSTGTSLNLNQLQAQLHQQQQQQQQLQQQQQQQQHQQHQQQQLLLNNNNNTSSSSLELATQTPSTNLNARVQYSQPSVVTSPPSWVH.

Thr-49 bears the Phosphothreonine; by PKB/AKT1 mark. The residue at position 80 (Ser-80) is a Phosphoserine. Positions Trp-100–Gly-206 form a DNA-binding region, fork-head. 4 disordered regions span residues Lys-187–Lys-210, Gly-222–Asp-283, Gln-319–Tyr-364, and Leu-580–His-600. Ser-195 carries the phosphoserine; by PKB/AKT1 modification. 2 stretches are compositionally biased toward polar residues: residues Ala-226–Ser-235 and Arg-261–Gly-270. Phosphoserine; by PKB/AKT1 is present on Ser-264. 3 positions are modified to phosphoserine: Ser-267, Ser-268, and Ser-273. Over residues Thr-330–Pro-342 the composition is skewed to pro residues. A compositionally biased stretch (low complexity) spans Gln-343–Pro-354.

In terms of assembly, interacts with melt.

The protein resides in the cytoplasm. Its subcellular location is the nucleus. Functionally, transcription factor involved in the regulation of the insulin signaling pathway. Consistently activates both the downstream target Thor\d4EBP and the feedback control target InR. Involved in negative regulation of the cell cycle, modulating cell growth and proliferation. In response to cellular stresses, such as nutrient deprivation or increased levels of reactive oxygen species, foxo is activated and inhibits growth through the action of target genes such as Thor. Foxo activated in the adult fat body can regulate lifespan in adults; an insulin peptide itself may function as one secondary messenger of insulin-regulated aging. Also regulates Lip4, homolog of human acid lipases, thereby acting as a key modulator of lipid metabolism by insulin signaling and integrates insulin responses to glucose and lipid homeostasis. The protein is Forkhead box protein O of Drosophila ananassae (Fruit fly).